Reading from the N-terminus, the 183-residue chain is Cell division protein SepF (183 aa).

Positions 149–183 are disordered; sequence SSEESAAPSVMAREEEATAPAAPSPAWGTQDAING.

It belongs to the SepF family. Homodimer. Interacts with FtsZ.

It is found in the cytoplasm. In terms of biological role, cell division protein that is part of the divisome complex and is recruited early to the Z-ring. Probably stimulates Z-ring formation, perhaps through the cross-linking of FtsZ protofilaments. Its function overlaps with FtsA. This is Cell division protein SepF from Synechococcus sp. (strain RCC307).